Consider the following 160-residue polypeptide: Cytochrome b6-f complex subunit 4 (160 aa).

A run of 3 helical transmembrane segments spans residues 36–56 (LLYIFPVVILGTIACVVGLAV), 95–115 (LLGIALQTLIPLGLMILPFIE), and 131–151 (VVFLFGTFLTIYLGIGACLPI).

It belongs to the cytochrome b family. PetD subfamily. As to quaternary structure, the 4 large subunits of the cytochrome b6-f complex are cytochrome b6, subunit IV (17 kDa polypeptide, PetD), cytochrome f and the Rieske protein, while the 4 small subunits are PetG, PetL, PetM and PetN. The complex functions as a dimer.

The protein localises to the cellular thylakoid membrane. Functionally, component of the cytochrome b6-f complex, which mediates electron transfer between photosystem II (PSII) and photosystem I (PSI), cyclic electron flow around PSI, and state transitions. This chain is Cytochrome b6-f complex subunit 4, found in Prochlorococcus marinus (strain MIT 9515).